The chain runs to 37 residues: Cytochrome b6-f complex subunit 5 (37 aa).

A helical membrane pass occupies residues 5 to 25 (FLFGIVLGLIPITLAGLFVTA).

It belongs to the PetG family. In terms of assembly, the 4 large subunits of the cytochrome b6-f complex are cytochrome b6, subunit IV (17 kDa polypeptide, PetD), cytochrome f and the Rieske protein, while the 4 small subunits are PetG, PetL, PetM and PetN. The complex functions as a dimer.

The protein resides in the plastid thylakoid membrane. In terms of biological role, component of the cytochrome b6-f complex, which mediates electron transfer between photosystem II (PSII) and photosystem I (PSI), cyclic electron flow around PSI, and state transitions. PetG is required for either the stability or assembly of the cytochrome b6-f complex. This chain is Cytochrome b6-f complex subunit 5, found in Cuscuta reflexa (Southern Asian dodder).